The sequence spans 220 residues: MKKEKAVVVFSGGQDSTTCLFWAIEQFAEVEAVTFNYNQRHKLEIDCAAEIAKELGIKHTVLDMSLLNQLAPNALTRTDMEITHEEGELPSTFVDGRNLLFLSFAAVLAKQVGARHIVTGVCETDFSGYPDCRDVFVKSLNVTLNLSMDYPFVIHTPLMWIDKAETWKLSDELGAFEFVREKTLTCYNGIIGDGCGECPACQLRKAGLDTYLQEREGANN.

10 to 20 (FSGGQDSTTCL) provides a ligand contact to ATP. 4 residues coordinate Zn(2+): C186, C195, C198, and C201.

It belongs to the QueC family. In terms of assembly, homodimer. Zn(2+) serves as cofactor.

The catalysed reaction is 7-carboxy-7-deazaguanine + NH4(+) + ATP = 7-cyano-7-deazaguanine + ADP + phosphate + H2O + H(+). The protein operates within purine metabolism; 7-cyano-7-deazaguanine biosynthesis. Functionally, catalyzes the ATP-dependent conversion of 7-carboxy-7-deazaguanine (CDG) to 7-cyano-7-deazaguanine (preQ(0)). The chain is 7-cyano-7-deazaguanine synthase from Bacillus cereus (strain ATCC 14579 / DSM 31 / CCUG 7414 / JCM 2152 / NBRC 15305 / NCIMB 9373 / NCTC 2599 / NRRL B-3711).